Consider the following 729-residue polypeptide: Fatty acid oxidation complex subunit alpha (729 aa).

The enoyl-CoA hydratase/isomerase stretch occupies residues 1-189; that stretch reads MLYKGDTLYL…KIGLVDGVVK (189 aa). D296 serves as a coordination point for substrate. The tract at residues 311-729 is 3-hydroxyacyl-CoA dehydrogenase; it reads ETPKQAAVLG…ARPVGDLKTA (419 aa). Residues M324, D343, 400–402, K407, and S429 each bind NAD(+); that span reads VVE. H450 (for 3-hydroxyacyl-CoA dehydrogenase activity) is an active-site residue. N453 provides a ligand contact to NAD(+). 2 residues coordinate substrate: N500 and Y660. The tract at residues 708–729 is disordered; it reads RHNEPYYPPVEPARPVGDLKTA.

The protein in the N-terminal section; belongs to the enoyl-CoA hydratase/isomerase family. In the C-terminal section; belongs to the 3-hydroxyacyl-CoA dehydrogenase family. Heterotetramer of two alpha chains (FadB) and two beta chains (FadA).

It catalyses the reaction a (3S)-3-hydroxyacyl-CoA + NAD(+) = a 3-oxoacyl-CoA + NADH + H(+). It carries out the reaction a (3S)-3-hydroxyacyl-CoA = a (2E)-enoyl-CoA + H2O. The catalysed reaction is a 4-saturated-(3S)-3-hydroxyacyl-CoA = a (3E)-enoyl-CoA + H2O. The enzyme catalyses (3S)-3-hydroxybutanoyl-CoA = (3R)-3-hydroxybutanoyl-CoA. It catalyses the reaction a (3Z)-enoyl-CoA = a 4-saturated (2E)-enoyl-CoA. It carries out the reaction a (3E)-enoyl-CoA = a 4-saturated (2E)-enoyl-CoA. Its pathway is lipid metabolism; fatty acid beta-oxidation. Involved in the aerobic and anaerobic degradation of long-chain fatty acids via beta-oxidation cycle. Catalyzes the formation of 3-oxoacyl-CoA from enoyl-CoA via L-3-hydroxyacyl-CoA. It can also use D-3-hydroxyacyl-CoA and cis-3-enoyl-CoA as substrate. The sequence is that of Fatty acid oxidation complex subunit alpha from Citrobacter koseri (strain ATCC BAA-895 / CDC 4225-83 / SGSC4696).